Consider the following 421-residue polypeptide: Ankyrin repeat and SOCS box protein 6 (421 aa).

6 ANK repeats span residues 67-97 (EGVS…NLNF), 102-131 (TYYT…DINR), 136-166 (HESS…DVNA), 170-205 (HGKT…DVKA), 226-255 (GGDK…DPSE), and 260-289 (ESLT…AYNC). The region spanning 360–415 (ALHFSLRQLESYPPPLKHLCRVAIRLYLQPWPVDVKVKALPLPDRLKWYLLSEHSG) is the SOCS box domain.

Belongs to the ankyrin SOCS box (ASB) family. Binds APS. Identified in a complex with ELOB and ELOC. Interacts with CUL5 and RNF7. Interacts with SQSTM1.

It is found in the cytoplasm. The protein operates within protein modification; protein ubiquitination. Probable substrate-recognition component of a SCF-like ECS (Elongin-Cullin-SOCS-box protein) E3 ubiquitin-protein ligase complex which mediates the ubiquitination and subsequent proteasomal degradation of target proteins. May play a role in the regulation of cell proliferation and autophagy by promoting the ubiquitination and degradation of SQSTM1. This is Ankyrin repeat and SOCS box protein 6 (ASB6) from Pongo abelii (Sumatran orangutan).